The chain runs to 227 residues: Endo-1,4-beta-xylanase 2 (227 aa).

Residues 1-36 (MVSIKSVLAAATAVSSALAAPFDFVPRDNSTALQAR) form the signal peptide. A glycan (N-linked (GlcNAc...) asparagine) is linked at Asn29. In terms of domain architecture, GH11 spans 37-225 (QVTPNAEGWH…SSGESDIYVQ (189 aa)). Glu121 acts as the Nucleophile in catalysis. Glu212 functions as the Proton donor in the catalytic mechanism.

This sequence belongs to the glycosyl hydrolase 11 (cellulase G) family.

The protein localises to the secreted. It carries out the reaction Endohydrolysis of (1-&gt;4)-beta-D-xylosidic linkages in xylans.. It functions in the pathway glycan degradation; xylan degradation. Endo-1,4-beta-xylanase involved in the hydrolysis of xylan, a major structural heterogeneous polysaccharide found in plant biomass representing the second most abundant polysaccharide in the biosphere, after cellulose. The polypeptide is Endo-1,4-beta-xylanase 2 (xyn2) (Humicola insolens (Soft-rot fungus)).